The chain runs to 224 residues: Phosphoglycolate phosphatase (224 aa).

Asp-11 (nucleophile) is an active-site residue. Residues Asp-11, Asp-13, and Asp-177 each coordinate Mg(2+).

It belongs to the HAD-like hydrolase superfamily. CbbY/CbbZ/Gph/YieH family. Mg(2+) is required as a cofactor.

It carries out the reaction 2-phosphoglycolate + H2O = glycolate + phosphate. It participates in organic acid metabolism; glycolate biosynthesis; glycolate from 2-phosphoglycolate: step 1/1. In terms of biological role, specifically catalyzes the dephosphorylation of 2-phosphoglycolate. Is involved in the dissimilation of the intracellular 2-phosphoglycolate formed during the DNA repair of 3'-phosphoglycolate ends, a major class of DNA lesions induced by oxidative stress. The chain is Phosphoglycolate phosphatase from Mannheimia succiniciproducens (strain KCTC 0769BP / MBEL55E).